Reading from the N-terminus, the 179-residue chain is MIFYLHGFDATSPGNHEKMRQLQFIDPDVRLVSYSTLHPKHDMQHLLKEVAKQMKHSDDPAPLMVGVGLGAYWAERIGFLNGLKSVLINPNLHPEENMQGKIDRPEEYADIANKCVSQFREKNTHKAMCIFSVNDEMFDNQQLASELSAYYSIDWDDVQPHKFHQLAAHLPKIKAFKLA.

Belongs to the UPF0227 family.

The protein is UPF0227 protein Shew185_2404 of Shewanella baltica (strain OS185).